A 235-amino-acid chain; its full sequence is Large ribosomal subunit protein uL1 (235 aa).

It belongs to the universal ribosomal protein uL1 family. As to quaternary structure, part of the 50S ribosomal subunit.

In terms of biological role, binds directly to 23S rRNA. The L1 stalk is quite mobile in the ribosome, and is involved in E site tRNA release. Functionally, protein L1 is also a translational repressor protein, it controls the translation of the L11 operon by binding to its mRNA. In Micrococcus luteus (strain ATCC 4698 / DSM 20030 / JCM 1464 / CCM 169 / CCUG 5858 / IAM 1056 / NBRC 3333 / NCIMB 9278 / NCTC 2665 / VKM Ac-2230) (Micrococcus lysodeikticus), this protein is Large ribosomal subunit protein uL1.